The primary structure comprises 513 residues: GMP synthase [glutamine-hydrolyzing] (513 aa).

In terms of domain architecture, Glutamine amidotransferase type-1 spans 8–198 (MILVLDFGSQ…VFGVCECEGE (191 aa)). Catalysis depends on Cys85, which acts as the Nucleophile. Active-site residues include His172 and Glu174. Positions 199-388 (WSMENFIEIE…LGIPDEIVWR (190 aa)) constitute a GMPS ATP-PPase domain. An ATP-binding site is contributed by 227 to 233 (GGVDSSV).

As to quaternary structure, homodimer.

The enzyme catalyses XMP + L-glutamine + ATP + H2O = GMP + L-glutamate + AMP + diphosphate + 2 H(+). The protein operates within purine metabolism; GMP biosynthesis; GMP from XMP (L-Gln route): step 1/1. Catalyzes the synthesis of GMP from XMP. The protein is GMP synthase [glutamine-hydrolyzing] (guaA) of Bacillus subtilis (strain 168).